We begin with the raw amino-acid sequence, 903 residues long: Protein translocase subunit SecA (903 aa).

Residues Q87, 105 to 109 (GEGKT), and D512 each bind ATP. Residues 853 to 903 (KQQQLSHYEENALVTEDPNAPATAERKVGRNDPCPCGSGKKYKQCHGRLQS) form a disordered region. Residues C886, C888, C897, and H898 each coordinate Zn(2+). Over residues 892–903 (KKYKQCHGRLQS) the composition is skewed to basic residues.

The protein belongs to the SecA family. As to quaternary structure, monomer and homodimer. Part of the essential Sec protein translocation apparatus which comprises SecA, SecYEG and auxiliary proteins SecDF-YajC and YidC. Zn(2+) serves as cofactor.

It localises to the cell inner membrane. It is found in the cytoplasm. It catalyses the reaction ATP + H2O + cellular proteinSide 1 = ADP + phosphate + cellular proteinSide 2.. Part of the Sec protein translocase complex. Interacts with the SecYEG preprotein conducting channel. Has a central role in coupling the hydrolysis of ATP to the transfer of proteins into and across the cell membrane, serving both as a receptor for the preprotein-SecB complex and as an ATP-driven molecular motor driving the stepwise translocation of polypeptide chains across the membrane. In Serratia proteamaculans (strain 568), this protein is Protein translocase subunit SecA.